The primary structure comprises 648 residues: Transketolase (648 aa).

Position 22 (His-22) interacts with substrate. Thiamine diphosphate-binding positions include His-62 and 109-111; that span reads GPL. Position 150 (Asp-150) interacts with Mg(2+). Gly-151 and Asn-180 together coordinate thiamine diphosphate. Residues Asn-180 and Val-182 each contribute to the Mg(2+) site. Substrate contacts are provided by His-252, Arg-345, and Ser-372. Position 252 (His-252) interacts with thiamine diphosphate. The active-site Proton donor is Glu-397. Thiamine diphosphate is bound at residue Phe-423. Substrate is bound by residues His-447, Asp-455, and Arg-506.

This sequence belongs to the transketolase family. In terms of assembly, homodimer. Requires Mg(2+) as cofactor. Ca(2+) is required as a cofactor. The cofactor is Mn(2+). It depends on Co(2+) as a cofactor. Thiamine diphosphate serves as cofactor.

It carries out the reaction D-sedoheptulose 7-phosphate + D-glyceraldehyde 3-phosphate = aldehydo-D-ribose 5-phosphate + D-xylulose 5-phosphate. In terms of biological role, catalyzes the transfer of a two-carbon ketol group from a ketose donor to an aldose acceptor, via a covalent intermediate with the cofactor thiamine pyrophosphate. The sequence is that of Transketolase (tkt) from Mycoplasma genitalium (strain ATCC 33530 / DSM 19775 / NCTC 10195 / G37) (Mycoplasmoides genitalium).